A 530-amino-acid polypeptide reads, in one-letter code: Hyccin 2 (530 aa).

Residues Thr30 and Thr306 each carry the phosphothreonine modification. Ser321 and Ser341 each carry phosphoserine. The interval Arg328 to Gln410 is disordered. Residues Ser353–Gly373 are compositionally biased toward polar residues. Phosphoserine is present on residues Ser430, Ser442, Ser444, and Ser491. Positions Gly498–Val530 are disordered. Residues Thr514–Val530 are compositionally biased toward polar residues.

It belongs to the Hyccin family. In terms of assembly, component of a phosphatidylinositol 4-kinase (PI4K) complex, composed of PI4KA, EFR3 (EFR3A or EFR3B), TTC7 (TTC7A or TTC7B) and HYCC (HYCC1 or HYCC2).

The protein resides in the cytoplasm. It localises to the cytosol. The protein localises to the cell membrane. Its function is as follows. Component of a complex required to localize phosphatidylinositol 4-kinase (PI4K) to the plasma membrane. The sequence is that of Hyccin 2 (HYCC2) from Pongo abelii (Sumatran orangutan).